The primary structure comprises 214 residues: Glutathione S-transferase 1 (214 aa).

One can recognise a GST N-terminal domain in the interval 2–83 (APMKLYGAVM…YAARKNKPEL (82 aa)). Residues serine 12, 41-42 (HK), 54-55 (QV), and 67-68 (ES) each bind glutathione. Positions 88-214 (NLEEAAMVDV…KVAALMKPSA (127 aa)) constitute a GST C-terminal domain.

This sequence belongs to the GST superfamily. Phi family. In terms of assembly, homodimer or heterodimer of GST-I and GST-IV (=GST-II). Expressed in the stem and leaves, lower levels are seen in the pollen and endosperm.

It catalyses the reaction RX + glutathione = an S-substituted glutathione + a halide anion + H(+). In terms of biological role, conjugation of reduced glutathione to a wide number of exogenous and endogenous hydrophobic electrophiles. Involved in the detoxification of certain herbicides. The polypeptide is Glutathione S-transferase 1 (GST1) (Zea mays (Maize)).